The sequence spans 526 residues: MSFLQEVGKRRTFAIISHPDAGKTTITEKVLLFGNAIQKAGTVKGRGSNQHAKSDWMEMEKERGISVTTSVMQFPFNGCLVNLLDTPGHEDFSEDTYRTLTAVDSCLMVIDAAKGVEDRTRKLMEVTRLRDTPIVTFMNKMDREVRDPMEVLDEVESELGMACAPISWPIGCGKEFKGVYHIHRDETILYQSGHGHEIQEVRTIKGLDNPELDVAIGNELALSVREELELVIGAAHEFDLELFLKGELTPVYFGTALGNFGVDHMLEGLTEWAPAPQTREATERPVEATEEKFSGFVFKIQANMDPKHRDRIAFMRIVSGTYTQGMKMNHVRTGKNISISDAVTFMAGDRARAEVAYAGDIIGLHNHGTIQIGDTFTQGENLKFSGIPNFAPELFRRIRLRDPLKQKQLLKGLVQLSEEGAVQVFRPLQNNDLIVGAVGVLQFDVVVSRLKSEYNVEAIYEGISVATARWVECSDGKMQDEFQRKNQTNLALDGGNNLTYIAPTMVNLNLAIERFPDVQFRATREH.

Positions 8 to 277 (GKRRTFAIIS…GLTEWAPAPQ (270 aa)) constitute a tr-type G domain. GTP-binding positions include 17 to 24 (SHPDAGKT), 85 to 89 (DTPGH), and 139 to 142 (NKMD).

Belongs to the TRAFAC class translation factor GTPase superfamily. Classic translation factor GTPase family. PrfC subfamily.

The protein localises to the cytoplasm. In terms of biological role, increases the formation of ribosomal termination complexes and stimulates activities of RF-1 and RF-2. It binds guanine nucleotides and has strong preference for UGA stop codons. It may interact directly with the ribosome. The stimulation of RF-1 and RF-2 is significantly reduced by GTP and GDP, but not by GMP. This is Peptide chain release factor 3 from Aliivibrio salmonicida (strain LFI1238) (Vibrio salmonicida (strain LFI1238)).